The chain runs to 345 residues: Phosphate acyltransferase (345 aa).

It belongs to the PlsX family. In terms of assembly, homodimer. Probably interacts with PlsY.

The protein resides in the cytoplasm. It catalyses the reaction a fatty acyl-[ACP] + phosphate = an acyl phosphate + holo-[ACP]. It participates in lipid metabolism; phospholipid metabolism. In terms of biological role, catalyzes the reversible formation of acyl-phosphate (acyl-PO(4)) from acyl-[acyl-carrier-protein] (acyl-ACP). This enzyme utilizes acyl-ACP as fatty acyl donor, but not acyl-CoA. This is Phosphate acyltransferase from Dichelobacter nodosus (strain VCS1703A).